Here is a 196-residue protein sequence, read N- to C-terminus: Adenylyl-sulfate kinase (196 aa).

Position 31-38 (31-38 (GLSGAGKS)) interacts with ATP. Ser105 acts as the Phosphoserine intermediate in catalysis.

Belongs to the APS kinase family.

It carries out the reaction adenosine 5'-phosphosulfate + ATP = 3'-phosphoadenylyl sulfate + ADP + H(+). It functions in the pathway sulfur metabolism; hydrogen sulfide biosynthesis; sulfite from sulfate: step 2/3. Its function is as follows. Catalyzes the synthesis of activated sulfate. The sequence is that of Adenylyl-sulfate kinase from Aeromonas salmonicida (strain A449).